Consider the following 462-residue polypeptide: MEYRIERDTMGEVKVPADKFWGAQTQRSKENFKIGSEKMPMRVVKAFAILKRSTALANKRLGNLDAEKAEAIAAVCDDVLKGKYDDNFPLVVWQTGSGTQSNMNMNEVVANRATALLKEKNSDQTIHPNDDVNRSQSSNDTFPTAMHVAAVLAVYEQLVPALDQLRNTLDEKAKAYNDIVKIGRTHLQDATPLTLGQEISGWVHMLDRSKEMILEATDKMRALAIGGTAVGTGINAHPEFGELVSEEITKLTGQTFSSSPNKFHALTSHDEITYAHGALKALAADLMKIANDVRWLASGPRCGIGEIVIPENEPGSSIMPGKVNPTQSEALTMIAAQIMGNDATIGFAASQGNFELNVFKPVIIYNFLQSVQLLSDGMNSFHDKCAVGIEPNKETIQENLSNSLMLVTALNPHIGYENAAKIAKLAHKEGLTLKEAALKLELLTEEQFNEMVKPEDMVKPKA.

Substrate is bound by residues 97–99, 127–130, 137–139, and Thr-185; these read SGT, HPND, and SSN. Residue His-186 is the Proton donor/acceptor of the active site. Ser-316 is an active-site residue. Substrate-binding positions include Ser-317 and 322-324; that span reads KVN.

The protein belongs to the class-II fumarase/aspartase family. Fumarase subfamily. Homotetramer.

It localises to the cytoplasm. The catalysed reaction is (S)-malate = fumarate + H2O. It participates in carbohydrate metabolism; tricarboxylic acid cycle; (S)-malate from fumarate: step 1/1. Involved in the TCA cycle. Catalyzes the stereospecific interconversion of fumarate to L-malate. The polypeptide is Fumarate hydratase class II (Bacillus subtilis (strain 168)).